Consider the following 209-residue polypeptide: Protein GrpE (209 aa).

Composition is skewed to basic and acidic residues over residues 1 to 16 and 34 to 44; these read MKKSTKKESTHSKEES and KAGEKTAEPEK. The interval 1–61 is disordered; sequence MKKSTKKEST…EKSPEAACRE (61 aa).

It belongs to the GrpE family. As to quaternary structure, homodimer.

It localises to the cytoplasm. Functionally, participates actively in the response to hyperosmotic and heat shock by preventing the aggregation of stress-denatured proteins, in association with DnaK and GrpE. It is the nucleotide exchange factor for DnaK and may function as a thermosensor. Unfolded proteins bind initially to DnaJ; upon interaction with the DnaJ-bound protein, DnaK hydrolyzes its bound ATP, resulting in the formation of a stable complex. GrpE releases ADP from DnaK; ATP binding to DnaK triggers the release of the substrate protein, thus completing the reaction cycle. Several rounds of ATP-dependent interactions between DnaJ, DnaK and GrpE are required for fully efficient folding. The chain is Protein GrpE from Methanosarcina acetivorans (strain ATCC 35395 / DSM 2834 / JCM 12185 / C2A).